The sequence spans 860 residues: Beta-glucosidase 1 (860 aa).

A signal peptide spans 1–19; sequence MKLSWLEAAALTAASVVSA. N-linked (GlcNAc...) asparagine glycosylation is found at N61, N211, and N252. Residue D280 is part of the active site. 12 N-linked (GlcNAc...) asparagine glycosylation sites follow: N315, N322, N354, N387, N442, N523, N542, N564, N658, N668, N690, and N712.

The protein belongs to the glycosyl hydrolase 3 family.

It catalyses the reaction Hydrolysis of terminal, non-reducing beta-D-glucosyl residues with release of beta-D-glucose.. It functions in the pathway glycan metabolism; cellulose degradation. In Aspergillus aculeatus, this protein is Beta-glucosidase 1.